Here is a 401-residue protein sequence, read N- to C-terminus: Phosphoglycerate kinase (401 aa).

Substrate is bound by residues 20–22, Arg-35, 58–61, Arg-117, and Arg-154; these read DFN and HLGR. ATP contacts are provided by residues Lys-204, Gly-298, Glu-329, and 358 to 361; that span reads GGDS.

This sequence belongs to the phosphoglycerate kinase family. As to quaternary structure, monomer.

It localises to the cytoplasm. The enzyme catalyses (2R)-3-phosphoglycerate + ATP = (2R)-3-phospho-glyceroyl phosphate + ADP. It functions in the pathway carbohydrate degradation; glycolysis; pyruvate from D-glyceraldehyde 3-phosphate: step 2/5. In Bifidobacterium longum subsp. infantis (strain ATCC 15697 / DSM 20088 / JCM 1222 / NCTC 11817 / S12), this protein is Phosphoglycerate kinase.